The following is a 196-amino-acid chain: DnaA initiator-associating protein DiaA (196 aa).

The SIS domain occupies 34–196 (LVQSLLNGNK…DNTLFPHQDD (163 aa)).

Belongs to the SIS family. DiaA subfamily. In terms of assembly, homotetramer; dimer of dimers.

Its function is as follows. Required for the timely initiation of chromosomal replication via direct interactions with the DnaA initiator protein. The sequence is that of DnaA initiator-associating protein DiaA from Enterobacter sp. (strain 638).